We begin with the raw amino-acid sequence, 285 residues long: Heme oxygenase 3, chloroplastic (285 aa).

Residues 1–58 (MATTRLNPSCHFPASTRLSCESYLGLRTTGRISYARTLTAPRGYLAVKANGGQASVVT) constitute a chloroplast transit peptide. Residue H89 participates in heme b binding. Residues 89–105 (HTKDQAREGEKESRSPE) are compositionally biased toward basic and acidic residues. The disordered stretch occupies residues 89–109 (HTKDQAREGEKESRSPEEGPV).

Belongs to the heme oxygenase family. Widely expressed at low levels.

The protein localises to the plastid. It localises to the chloroplast. The enzyme catalyses heme b + 3 reduced [NADPH--hemoprotein reductase] + 3 O2 = biliverdin IXalpha + CO + Fe(2+) + 3 oxidized [NADPH--hemoprotein reductase] + 3 H2O + H(+). Its function is as follows. Catalyzes the opening of the heme ring to form the open-chain tetrapyrrole biliverdin IX with the release of iron and carbon monoxide (CO). Produces specifically the biliverdin IX-alpha isomer. Plays a minor role in phytochrome assembly and photomorphogenesis. In Arabidopsis thaliana (Mouse-ear cress), this protein is Heme oxygenase 3, chloroplastic (HO3).